A 190-amino-acid chain; its full sequence is Vascular endothelial growth factor A (190 aa).

The first 26 residues, 1-26 (MNFLLSWVHWSLALLLYLHHAKWSQA), serve as a signal peptide directing secretion. 3 cysteine pairs are disulfide-bonded: Cys-51/Cys-93, Cys-82/Cys-127, and Cys-86/Cys-129. Asn-100 is a glycosylation site (N-linked (GlcNAc...) asparagine).

The protein belongs to the PDGF/VEGF growth factor family. As to quaternary structure, homodimer; disulfide-linked. Also found as heterodimer with PGF. Interacts with NRP1. Interacts with BSG. Interacts with CD82; this interaction inhibits VEGFA-mediated signaling pathway.

The protein resides in the secreted. Growth factor active in angiogenesis, vasculogenesis and endothelial cell growth. Induces endothelial cell proliferation, promotes cell migration, inhibits apoptosis and induces permeabilization of blood vessels. Binds to the FLT1/VEGFR1 and KDR/VEGFR2 receptors, heparan sulfate and heparin. Binding to NRP1 receptor initiates a signaling pathway needed for motor neuron axon guidance and cell body migration, including for the caudal migration of facial motor neurons from rhombomere 4 to rhombomere 6 during embryonic development. Also binds the DEAR/FBXW7-AS1 receptor. In Bos taurus (Bovine), this protein is Vascular endothelial growth factor A (VEGFA).